We begin with the raw amino-acid sequence, 1571 residues long: Pentafunctional AROM polypeptide 2 (1571 aa).

The interval 1–380 (MAEPTKISIL…YEPKASVVSN (380 aa)) is 3-dehydroquinate synthase. NAD(+) contacts are provided by residues 44–46 (DTN), 81–84 (ENSK), 112–114 (GGV), and aspartate 117. Arginine 128 contacts 7-phospho-2-dehydro-3-deoxy-D-arabino-heptonate. Residue 137–138 (TT) participates in NAD(+) binding. Positions 144 and 150 each coordinate 7-phospho-2-dehydro-3-deoxy-D-arabino-heptonate. Lysine 159 lines the NAD(+) pocket. Residue asparagine 160 coordinates 7-phospho-2-dehydro-3-deoxy-D-arabino-heptonate. Residues 177 to 180 (FIDT) and asparagine 188 each bind NAD(+). Glutamate 192 contributes to the Zn(2+) binding site. 7-phospho-2-dehydro-3-deoxy-D-arabino-heptonate-binding positions include 192-195 (EVIK) and lysine 246. The active-site Proton acceptor; for 3-dehydroquinate synthase activity is glutamate 256. Residues 260-264 (RNLLN) and histidine 267 contribute to the 7-phospho-2-dehydro-3-deoxy-D-arabino-heptonate site. Histidine 267 provides a ligand contact to Zn(2+). Histidine 271 acts as the Proton acceptor; for 3-dehydroquinate synthase activity in catalysis. Positions 283 and 352 each coordinate 7-phospho-2-dehydro-3-deoxy-D-arabino-heptonate. Residue histidine 283 coordinates Zn(2+). Residues 393–838 (VIPGVPKNLN…WDALKQKFGV (446 aa)) are EPSP synthase. Residue cysteine 820 is the For EPSP synthase activity of the active site. The interval 859–1051 (NASIIIIGMR…RKKHLSFFVS (193 aa)) is shikimate kinase. Residue 866–873 (GMRGAGKT) participates in ATP binding. The 3-dehydroquinase stretch occupies residues 1052-1273 (LTLPDLRESG…AAPGQLSAAE (222 aa)). Histidine 1175 serves as the catalytic Proton acceptor; for 3-dehydroquinate dehydratase activity. Lysine 1203 acts as the Schiff-base intermediate with substrate; for 3-dehydroquinate dehydratase activity in catalysis. Residues 1286 to 1571 (AKKFAVLGKP…NAVLGTNETK (286 aa)) are shikimate dehydrogenase.

In the N-terminal section; belongs to the sugar phosphate cyclases superfamily. Dehydroquinate synthase family. The protein in the 2nd section; belongs to the EPSP synthase family. This sequence in the 3rd section; belongs to the shikimate kinase family. It in the 4th section; belongs to the type-I 3-dehydroquinase family. In the C-terminal section; belongs to the shikimate dehydrogenase family. As to quaternary structure, homodimer. Zn(2+) serves as cofactor.

The protein resides in the cytoplasm. It catalyses the reaction 7-phospho-2-dehydro-3-deoxy-D-arabino-heptonate = 3-dehydroquinate + phosphate. The enzyme catalyses 3-dehydroquinate = 3-dehydroshikimate + H2O. It carries out the reaction shikimate + NADP(+) = 3-dehydroshikimate + NADPH + H(+). The catalysed reaction is shikimate + ATP = 3-phosphoshikimate + ADP + H(+). It catalyses the reaction 3-phosphoshikimate + phosphoenolpyruvate = 5-O-(1-carboxyvinyl)-3-phosphoshikimate + phosphate. Its pathway is metabolic intermediate biosynthesis; chorismate biosynthesis; chorismate from D-erythrose 4-phosphate and phosphoenolpyruvate: step 2/7. It participates in metabolic intermediate biosynthesis; chorismate biosynthesis; chorismate from D-erythrose 4-phosphate and phosphoenolpyruvate: step 3/7. It functions in the pathway metabolic intermediate biosynthesis; chorismate biosynthesis; chorismate from D-erythrose 4-phosphate and phosphoenolpyruvate: step 4/7. The protein operates within metabolic intermediate biosynthesis; chorismate biosynthesis; chorismate from D-erythrose 4-phosphate and phosphoenolpyruvate: step 5/7. Its pathway is metabolic intermediate biosynthesis; chorismate biosynthesis; chorismate from D-erythrose 4-phosphate and phosphoenolpyruvate: step 6/7. In terms of biological role, the AROM polypeptide catalyzes 5 consecutive enzymatic reactions in prechorismate polyaromatic amino acid biosynthesis. The sequence is that of Pentafunctional AROM polypeptide 2 from Talaromyces marneffei (strain ATCC 18224 / CBS 334.59 / QM 7333) (Penicillium marneffei).